We begin with the raw amino-acid sequence, 599 residues long: MDIGDLPEASKTQSPKSYLYTSIARNHLGDVAALIISCLISYGRLTATDISHRTKIPVKKVKSALVSLIQMNCIFYWRESGSKQVFYSFNETGILVFLHSGDIISHVTTHYGEDSAEIVQNILVNGHIRIEDYVNNIDDEEKKLDIQTLFFRLFTDRWIVRLQPFNFNPVDDIWNQLYQETLKNTPRTSTTSEVKRVAEAKEKTKTKFINLIESGQSPKDLYLTQDGIKRLNPALVVTFNLSRFQKHLRTTALVSLAKSRVGLLSARIYESALKLVEASSPDLTHPFLQISGLINDPEEARFFVNSIENKLVDEKKTVFNVRDLGRLLPHDLDLRNSILTYNFVKHNLTPKKRSASNGDDERPTKKIKTEDSDDIAESLESNGTVQIESNGNGNSISLIQHHLKLLSSGSGAQLLIEITPGSYTVPYASLLKYLKQYNFETLVKTTLGPNSFRILRCLKSLKIGDEKTISNSVLLKEKTVRNEIYKLLKANMLEVQEVPRSADRAASKTFYLFRHKEFYSYEFLCNSLIFSMAEILSNIQAFREDHKILLEKCEREDVKGHEEELLLESELKTLKSLQTRQVSNTVRFNRIKSLYEIYQ.

The disordered stretch occupies residues 350–375 (PKKRSASNGDDERPTKKIKTEDSDDI). Basic and acidic residues predominate over residues 359–370 (DDERPTKKIKTE). Residues 528-549 (LIFSMAEILSNIQAFREDHKIL) are leucine-zipper.

This sequence belongs to the RNA polymerase beta chain family. In terms of assembly, component of the RNA polymerase III (Pol III) complex consisting of 17 subunits.

It localises to the nucleus. In terms of biological role, DNA-dependent RNA polymerase catalyzes the transcription of DNA into RNA using the four ribonucleoside triphosphates as substrates. Specific core component of RNA polymerase III which synthesizes small RNAs, such as 5S rRNA and tRNAs. This is DNA-directed RNA polymerase III subunit RPC3 (RPC82) from Scheffersomyces stipitis (strain ATCC 58785 / CBS 6054 / NBRC 10063 / NRRL Y-11545) (Yeast).